The following is a 424-amino-acid chain: MSKLTIIRGFNDILPQESCKWQFLESKIKSILDKYNYDEVRLPVLEKSELFHRSVGETSDIVSKETYDFVDRSGESLTLRPEGTAGCVRMVIENSLANRGQTQKLWYSGPMFRYERPQKGRYRQFYQLGVEAYGYDNIAIDLEILTISWNLFRELGISECVKLELNSLGSSSNRQEYTKALLEYLKPYHAQLDEDSIKRLDKNPLRILDSKNEQTQQVLANAPKLIDFIDEDSLTRFEQTCEYLDNLGVNYQVNQKLVRGLDYYSGLVFEWVTDRLGAQAAVCAGGRYDNLIESLGGQKAGAIGFAIGLERLLLLLESEGKLPIEDDKSDVFFILDNNQLHRSLLLVENVRQELPALKIDMDLKFGSFKSQFKKADKSDAKIAVIIGQDELLQQAVGVKYLQQDKQQEQIPLNKLINFLEKIAI.

It belongs to the class-II aminoacyl-tRNA synthetase family. As to quaternary structure, homodimer.

It is found in the cytoplasm. The enzyme catalyses tRNA(His) + L-histidine + ATP = L-histidyl-tRNA(His) + AMP + diphosphate + H(+). In Francisella philomiragia subsp. philomiragia (strain ATCC 25017 / CCUG 19701 / FSC 153 / O#319-036), this protein is Histidine--tRNA ligase.